The sequence spans 134 residues: MFGLISLWHLFWLAVMAGILVVAHRNRETIRYKTSEFMVRLRSRFGGYTSINDHFVRDLEDGFSSQNFDLTSANSNDTRSGLDEASKQEIRRIMEEQGLGFDQARLVYTTRKFGAHGIAPDGMPLDPKVVTFRR.

The signal sequence occupies residues M1–A23.

The protein belongs to the UPF0357 family.

The chain is UPF0357 protein AAL017W from Eremothecium gossypii (strain ATCC 10895 / CBS 109.51 / FGSC 9923 / NRRL Y-1056) (Yeast).